A 305-amino-acid polypeptide reads, in one-letter code: Ornithine carbamoyltransferase, anabolic (305 aa).

Carbamoyl phosphate-binding positions include 53–56, Gln80, Arg104, and 131–134; these read STRT and HPCQ. L-ornithine contacts are provided by residues Asn162, Asp219, and 223–224; that span reads SM. Residues 259–260 and Arg287 contribute to the carbamoyl phosphate site; that span reads CL.

It belongs to the aspartate/ornithine carbamoyltransferase superfamily. OTCase family. As to quaternary structure, homotrimer.

The protein localises to the cytoplasm. It carries out the reaction carbamoyl phosphate + L-ornithine = L-citrulline + phosphate + H(+). The protein operates within amino-acid biosynthesis; L-arginine biosynthesis; L-arginine from L-ornithine and carbamoyl phosphate: step 1/3. Its function is as follows. Reversibly catalyzes the transfer of the carbamoyl group from carbamoyl phosphate (CP) to the N(epsilon) atom of ornithine (ORN) to produce L-citrulline, which is a substrate for argininosuccinate synthetase (ArgG) involved in the final step in arginine biosynthesis. This Pseudomonas aeruginosa (strain ATCC 15692 / DSM 22644 / CIP 104116 / JCM 14847 / LMG 12228 / 1C / PRS 101 / PAO1) protein is Ornithine carbamoyltransferase, anabolic.